The chain runs to 273 residues: 2,3,4,5-tetrahydropyridine-2,6-dicarboxylate N-succinyltransferase (273 aa).

Positions 104 and 141 each coordinate substrate.

Belongs to the transferase hexapeptide repeat family. As to quaternary structure, homotrimer.

Its subcellular location is the cytoplasm. The catalysed reaction is (S)-2,3,4,5-tetrahydrodipicolinate + succinyl-CoA + H2O = (S)-2-succinylamino-6-oxoheptanedioate + CoA. It functions in the pathway amino-acid biosynthesis; L-lysine biosynthesis via DAP pathway; LL-2,6-diaminopimelate from (S)-tetrahydrodipicolinate (succinylase route): step 1/3. This chain is 2,3,4,5-tetrahydropyridine-2,6-dicarboxylate N-succinyltransferase, found in Azoarcus sp. (strain BH72).